Here is a 317-residue protein sequence, read N- to C-terminus: Long form salivary protein D7L2 (317 aa).

A signal peptide spans 1 to 20 (MYKLLVALHLILCTVSHVKT). Cystine bridges form between cysteine 39–cysteine 76, cysteine 72–cysteine 131, cysteine 181–cysteine 214, cysteine 195–cysteine 316, and cysteine 255–cysteine 266. 2 residues coordinate thromboxane A2: tryptophan 58 and tyrosine 73. Serotonin is bound by residues glutamate 182, tyrosine 264, aspartate 281, aspartate 284, and methionine 308.

It belongs to the PBP/GOBP family. In terms of tissue distribution, female salivary gland.

The protein localises to the secreted. Its function is as follows. Modulates blood feeding of female mosquitoes on vertebrate species by binding and sequestering different mediators involved in the host response, such as biogenic amines and eicosanoids. Binds serotonin with high affinity. Binds tryptamine, octopamine, dopamine and noradrenaline with low affinity. Binds leukotriene C4, leukotriene D4, leukotriene E4 and U-46619, a stable analog of thromboxane A2. Does not bind leukotriene B4, adrenaline, histamine and ADP. Inhibits platelet aggregation induced by low concentrations of collagen and arachidonic acid but not by ADP or adrenaline. In Anopheles darlingi (Mosquito), this protein is Long form salivary protein D7L2.